The following is a 412-amino-acid chain: Putative gustatory receptor 58c (412 aa).

2 consecutive transmembrane segments (helical) span residues 39 to 59 (VVYC…ALFV) and 72 to 92 (MFGV…LFLM). N-linked (GlcNAc...) asparagine glycosylation occurs at Asn158. A helical transmembrane segment spans residues 173 to 193 (IVYALIMILLMSYVDMTVYMV). Residue Asn203 is glycosylated (N-linked (GlcNAc...) asparagine). 3 consecutive transmembrane segments (helical) span residues 224-241 (IPRE…RKLW), 262-282 (VLFN…RLWI), and 296-316 (ILYA…FSIF). Asn337, Asn386, and Asn391 each carry an N-linked (GlcNAc...) asparagine glycan.

It belongs to the insect chemoreceptor superfamily. Gustatory receptor (GR) family. Gr10a subfamily.

The protein resides in the cell membrane. Probable gustatory receptor which mediates acceptance or avoidance behavior, depending on its substrates. In Drosophila melanogaster (Fruit fly), this protein is Putative gustatory receptor 58c (Gr58c).